We begin with the raw amino-acid sequence, 201 residues long: Proteasome subunit beta type-2 (201 aa).

M1 carries the N-acetylmethionine modification.

This sequence belongs to the peptidase T1B family. The 26S proteasome consists of a 20S proteasome core and two 19S regulatory subunits. The 20S proteasome core is a barrel-shaped complex made of 28 subunits that are arranged in four stacked rings. The two outer rings are each formed by seven alpha subunits, and the two inner rings are formed by seven beta subunits. The proteolytic activity is exerted by three beta-subunits PSMB5, PSMB6 and PSMB7.

Its subcellular location is the cytoplasm. It localises to the nucleus. Functionally, non-catalytic component of the 20S core proteasome complex involved in the proteolytic degradation of most intracellular proteins. This complex plays numerous essential roles within the cell by associating with different regulatory particles. Associated with two 19S regulatory particles, forms the 26S proteasome and thus participates in the ATP-dependent degradation of ubiquitinated proteins. The 26S proteasome plays a key role in the maintenance of protein homeostasis by removing misfolded or damaged proteins that could impair cellular functions, and by removing proteins whose functions are no longer required. Associated with the PA200 or PA28, the 20S proteasome mediates ubiquitin-independent protein degradation. This type of proteolysis is required in several pathways including spermatogenesis (20S-PA200 complex) or generation of a subset of MHC class I-presented antigenic peptides (20S-PA28 complex). In Bos taurus (Bovine), this protein is Proteasome subunit beta type-2 (PSMB2).